The following is a 223-amino-acid chain: Phosphoribosylformylglycinamidine synthase subunit PurQ (223 aa).

The Glutamine amidotransferase type-1 domain occupies 2–223 (KFAVLKFPGS…MVNSWREQNV (222 aa)). Residue Cys-85 is the Nucleophile of the active site. Residues His-193 and Glu-195 contribute to the active site.

Part of the FGAM synthase complex composed of 1 PurL, 1 PurQ and 2 PurS subunits.

It localises to the cytoplasm. The catalysed reaction is N(2)-formyl-N(1)-(5-phospho-beta-D-ribosyl)glycinamide + L-glutamine + ATP + H2O = 2-formamido-N(1)-(5-O-phospho-beta-D-ribosyl)acetamidine + L-glutamate + ADP + phosphate + H(+). It carries out the reaction L-glutamine + H2O = L-glutamate + NH4(+). The protein operates within purine metabolism; IMP biosynthesis via de novo pathway; 5-amino-1-(5-phospho-D-ribosyl)imidazole from N(2)-formyl-N(1)-(5-phospho-D-ribosyl)glycinamide: step 1/2. Its function is as follows. Part of the phosphoribosylformylglycinamidine synthase complex involved in the purines biosynthetic pathway. Catalyzes the ATP-dependent conversion of formylglycinamide ribonucleotide (FGAR) and glutamine to yield formylglycinamidine ribonucleotide (FGAM) and glutamate. The FGAM synthase complex is composed of three subunits. PurQ produces an ammonia molecule by converting glutamine to glutamate. PurL transfers the ammonia molecule to FGAR to form FGAM in an ATP-dependent manner. PurS interacts with PurQ and PurL and is thought to assist in the transfer of the ammonia molecule from PurQ to PurL. The polypeptide is Phosphoribosylformylglycinamidine synthase subunit PurQ (Staphylococcus saprophyticus subsp. saprophyticus (strain ATCC 15305 / DSM 20229 / NCIMB 8711 / NCTC 7292 / S-41)).